The chain runs to 331 residues: Tetraacyldisaccharide 4'-kinase (331 aa).

Residue 57–64 participates in ATP binding; that stretch reads SVGGNGKT.

Belongs to the LpxK family.

It carries out the reaction a lipid A disaccharide + ATP = a lipid IVA + ADP + H(+). The protein operates within glycolipid biosynthesis; lipid IV(A) biosynthesis; lipid IV(A) from (3R)-3-hydroxytetradecanoyl-[acyl-carrier-protein] and UDP-N-acetyl-alpha-D-glucosamine: step 6/6. Its function is as follows. Transfers the gamma-phosphate of ATP to the 4'-position of a tetraacyldisaccharide 1-phosphate intermediate (termed DS-1-P) to form tetraacyldisaccharide 1,4'-bis-phosphate (lipid IVA). This is Tetraacyldisaccharide 4'-kinase from Histophilus somni (strain 2336) (Haemophilus somnus).